We begin with the raw amino-acid sequence, 173 residues long: Ribosome maturation factor RimM (173 aa).

The region spanning 97 to 170 (EHEYYYHEII…RIRVHIMEGL (74 aa)) is the PRC barrel domain.

Belongs to the RimM family. As to quaternary structure, binds ribosomal protein uS19.

The protein resides in the cytoplasm. Functionally, an accessory protein needed during the final step in the assembly of 30S ribosomal subunit, possibly for assembly of the head region. Essential for efficient processing of 16S rRNA. May be needed both before and after RbfA during the maturation of 16S rRNA. It has affinity for free ribosomal 30S subunits but not for 70S ribosomes. The chain is Ribosome maturation factor RimM from Shouchella clausii (strain KSM-K16) (Alkalihalobacillus clausii).